Here is a 181-residue protein sequence, read N- to C-terminus: Respiratory supercomplex factor 1, mitochondrial (181 aa).

The HIG1 domain maps to 6-97 (LPSSMEDNPQ…TERQQRREFE (92 aa)). The next 2 helical transmembrane spans lie at 33–49 (PLIP…LYRA) and 69–86 (IYAQ…GMYF). A disordered region spans residues 136–160 (AAKEAGKRPAPNKIPEQDAARSAIE).

It belongs to the RCF1 family. As to quaternary structure, associates with the respiratory chain complex III/complex IV supercomplex.

Its subcellular location is the mitochondrion membrane. Cytochrome c oxidase subunit which plays a role in assembly of respiratory supercomplexes. This Neosartorya fischeri (strain ATCC 1020 / DSM 3700 / CBS 544.65 / FGSC A1164 / JCM 1740 / NRRL 181 / WB 181) (Aspergillus fischerianus) protein is Respiratory supercomplex factor 1, mitochondrial (rcf1).